Consider the following 305-residue polypeptide: Ornithine carbamoyltransferase (305 aa).

Residues 47 to 50 (STRT), Arg-98, and 125 to 128 (HPCQ) each bind carbamoyl phosphate. Residues Asn-156, Asp-221, and 225-226 (SM) contribute to the L-ornithine site. Carbamoyl phosphate-binding positions include 262–263 (CL) and Arg-290.

It belongs to the aspartate/ornithine carbamoyltransferase superfamily. OTCase family.

It is found in the cytoplasm. It carries out the reaction carbamoyl phosphate + L-ornithine = L-citrulline + phosphate + H(+). The protein operates within amino-acid biosynthesis; L-arginine biosynthesis; L-arginine from L-ornithine and carbamoyl phosphate: step 1/3. Its function is as follows. Reversibly catalyzes the transfer of the carbamoyl group from carbamoyl phosphate (CP) to the N(epsilon) atom of ornithine (ORN) to produce L-citrulline. The protein is Ornithine carbamoyltransferase of Methanococcus vannielii (strain ATCC 35089 / DSM 1224 / JCM 13029 / OCM 148 / SB).